Consider the following 367-residue polypeptide: Queuine tRNA-ribosyltransferase (367 aa).

Asp-92 serves as the catalytic Proton acceptor. Substrate is bound by residues 92–96 (DSGGF), Asp-146, Gln-188, and Gly-215. The interval 246–252 (GVGTPKD) is RNA binding. Asp-265 (nucleophile) is an active-site residue. Residues Cys-303, Cys-305, Cys-308, and His-334 each contribute to the Zn(2+) site.

It belongs to the queuine tRNA-ribosyltransferase family. In terms of assembly, homodimer. Within each dimer, one monomer is responsible for RNA recognition and catalysis, while the other monomer binds to the replacement base PreQ1. The cofactor is Zn(2+).

It carries out the reaction 7-aminomethyl-7-carbaguanine + guanosine(34) in tRNA = 7-aminomethyl-7-carbaguanosine(34) in tRNA + guanine. It functions in the pathway tRNA modification; tRNA-queuosine biosynthesis. Functionally, catalyzes the base-exchange of a guanine (G) residue with the queuine precursor 7-aminomethyl-7-deazaguanine (PreQ1) at position 34 (anticodon wobble position) in tRNAs with GU(N) anticodons (tRNA-Asp, -Asn, -His and -Tyr). Catalysis occurs through a double-displacement mechanism. The nucleophile active site attacks the C1' of nucleotide 34 to detach the guanine base from the RNA, forming a covalent enzyme-RNA intermediate. The proton acceptor active site deprotonates the incoming PreQ1, allowing a nucleophilic attack on the C1' of the ribose to form the product. After dissociation, two additional enzymatic reactions on the tRNA convert PreQ1 to queuine (Q), resulting in the hypermodified nucleoside queuosine (7-(((4,5-cis-dihydroxy-2-cyclopenten-1-yl)amino)methyl)-7-deazaguanosine). This Francisella tularensis subsp. tularensis (strain FSC 198) protein is Queuine tRNA-ribosyltransferase.